A 381-amino-acid chain; its full sequence is Queuine tRNA-ribosyltransferase (381 aa).

D92 functions as the Proton acceptor in the catalytic mechanism. Substrate contacts are provided by residues 92–96 (DSGGF), D146, Q190, and G217. The tract at residues 248–254 (GVGRPED) is RNA binding. Catalysis depends on D267, which acts as the Nucleophile. The RNA binding; important for wobble base 34 recognition stretch occupies residues 272–276 (TRNAR). 4 residues coordinate Zn(2+): C305, C307, C310, and H337.

It belongs to the queuine tRNA-ribosyltransferase family. Homodimer. Within each dimer, one monomer is responsible for RNA recognition and catalysis, while the other monomer binds to the replacement base PreQ1. Zn(2+) is required as a cofactor.

It carries out the reaction 7-aminomethyl-7-carbaguanine + guanosine(34) in tRNA = 7-aminomethyl-7-carbaguanosine(34) in tRNA + guanine. It functions in the pathway tRNA modification; tRNA-queuosine biosynthesis. In terms of biological role, catalyzes the base-exchange of a guanine (G) residue with the queuine precursor 7-aminomethyl-7-deazaguanine (PreQ1) at position 34 (anticodon wobble position) in tRNAs with GU(N) anticodons (tRNA-Asp, -Asn, -His and -Tyr). Catalysis occurs through a double-displacement mechanism. The nucleophile active site attacks the C1' of nucleotide 34 to detach the guanine base from the RNA, forming a covalent enzyme-RNA intermediate. The proton acceptor active site deprotonates the incoming PreQ1, allowing a nucleophilic attack on the C1' of the ribose to form the product. After dissociation, two additional enzymatic reactions on the tRNA convert PreQ1 to queuine (Q), resulting in the hypermodified nucleoside queuosine (7-(((4,5-cis-dihydroxy-2-cyclopenten-1-yl)amino)methyl)-7-deazaguanosine). The protein is Queuine tRNA-ribosyltransferase of Xanthomonas campestris pv. campestris (strain B100).